We begin with the raw amino-acid sequence, 262 residues long: Phosphatidylglycerol--prolipoprotein diacylglyceryl transferase (262 aa).

4 consecutive transmembrane segments (helical) span residues F17–G37, L59–Y79, I94–W114, and T121–G141. R142 contributes to the a 1,2-diacyl-sn-glycero-3-phospho-(1'-sn-glycerol) binding site. The next 3 helical transmembrane spans lie at Q176–G196, V201–Y221, and L231–I251.

The protein belongs to the Lgt family.

The protein localises to the cell inner membrane. It catalyses the reaction L-cysteinyl-[prolipoprotein] + a 1,2-diacyl-sn-glycero-3-phospho-(1'-sn-glycerol) = an S-1,2-diacyl-sn-glyceryl-L-cysteinyl-[prolipoprotein] + sn-glycerol 1-phosphate + H(+). It functions in the pathway protein modification; lipoprotein biosynthesis (diacylglyceryl transfer). In terms of biological role, catalyzes the transfer of the diacylglyceryl group from phosphatidylglycerol to the sulfhydryl group of the N-terminal cysteine of a prolipoprotein, the first step in the formation of mature lipoproteins. The chain is Phosphatidylglycerol--prolipoprotein diacylglyceryl transferase from Polynucleobacter necessarius subsp. necessarius (strain STIR1).